The primary structure comprises 108 residues: Transcription initiation factor IIA subunit 2 (108 aa).

The protein belongs to the TFIIA subunit 2 family. TFIIA is a heterodimer of the large unprocessed subunit 1 and a small subunit gamma. It was originally believed to be a heterotrimer of an alpha, a beta and a gamma subunit. Interacts with NCOA6 general coactivator. TFIIA forms a complex with TBP.

The protein resides in the nucleus. In terms of biological role, TFIIA is a component of the transcription machinery of RNA polymerase II and plays an important role in transcriptional activation. TFIIA in a complex with TBP mediates transcriptional activity. The chain is Transcription initiation factor IIA subunit 2 (gtf2a2) from Oncorhynchus mykiss (Rainbow trout).